Consider the following 1809-residue polypeptide: Pyochelin synthetase PchF (1809 aa).

Residues Phe69–Pro490 form a condensation/cyclization region. An adenylation region spans residues Phe520 to Arg915. Positions Ala1407 to Pro1488 constitute a Carrier domain. Residue Ser1442 is modified to O-(pantetheine 4'-phosphoryl)serine. Positions Leu1584 to Gln1797 are thioesterase.

It belongs to the NRP synthetase family. It depends on pantetheine 4'-phosphate as a cofactor.

The catalysed reaction is holo-[peptidyl-carrier protein] + L-cysteine + ATP = L-cysteinyl-[peptidyl-carrier protein] + AMP + diphosphate. The protein operates within siderophore biosynthesis. In terms of biological role, involved in the biosynthesis of the siderophore pyochelin. Adenylates L-cysteine and loads it onto its peptidyl carrier domain via a thioester linkage to the phosphopanthetheine moiety. Then forms a peptide bond between the salicyl-thiazolinyl intermediate bound to the second carrier domain of PchE and the cysteine bound to its own peptidyl carrier domain to form the salicyl-thiazolinyl-cysteinyl-S-PCP2 intermediate. It subsequently cyclizes the C-terminal cysteine to form the second thiazoline heterocycle in the salicyl-thiazolinyl-thiazolinyl-S-PCP2 intermediate. When this intermediate is released by the action of a thioesterase, it produces the tricyclic acid hydroxyphenyl-thiazolyl-thiazolinyl-carboxylic acid (HPTT-COOH), an advanced intermediate containing the aryl-4,2-bis-heterocyclic skeleton of the bithiazoline class of siderophores. The protein is Pyochelin synthetase PchF of Pseudomonas aeruginosa (strain UCBPP-PA14).